We begin with the raw amino-acid sequence, 215 residues long: 3-demethoxyubiquinol 3-hydroxylase (215 aa).

6 residues coordinate Fe cation: E64, E94, H97, E146, E178, and H181.

It belongs to the COQ7 family. Fe cation serves as cofactor.

Its subcellular location is the cell membrane. The catalysed reaction is a 5-methoxy-2-methyl-3-(all-trans-polyprenyl)benzene-1,4-diol + AH2 + O2 = a 3-demethylubiquinol + A + H2O. Its pathway is cofactor biosynthesis; ubiquinone biosynthesis. Its function is as follows. Catalyzes the hydroxylation of 2-nonaprenyl-3-methyl-6-methoxy-1,4-benzoquinol during ubiquinone biosynthesis. The chain is 3-demethoxyubiquinol 3-hydroxylase from Stutzerimonas stutzeri (strain A1501) (Pseudomonas stutzeri).